Reading from the N-terminus, the 681-residue chain is Potassium-transporting ATPase ATP-binding subunit (681 aa).

Transmembrane regions (helical) follow at residues 37-57, 64-84, 218-238, and 255-275; these read MFVV…PTYF, VGYN…ANFA, IALT…VMTL, and IALL…AIGI. Residue aspartate 306 is the 4-aspartylphosphate intermediate of the active site. ATP contacts are provided by residues aspartate 343, glutamate 347, 375 to 382, and lysine 394; that span reads FSAETRMS. Mg(2+)-binding residues include aspartate 517 and aspartate 521. The next 3 membrane-spanning stretches (helical) occupy residues 573–595, 615–635, and 655–675; these read ALTT…AIIS, AILS…PIAM, and IYGL…DMII.

Belongs to the cation transport ATPase (P-type) (TC 3.A.3) family. Type IA subfamily. As to quaternary structure, the system is composed of three essential subunits: KdpA, KdpB and KdpC.

The protein localises to the cell membrane. It catalyses the reaction K(+)(out) + ATP + H2O = K(+)(in) + ADP + phosphate + H(+). Its function is as follows. Part of the high-affinity ATP-driven potassium transport (or Kdp) system, which catalyzes the hydrolysis of ATP coupled with the electrogenic transport of potassium into the cytoplasm. This subunit is responsible for energy coupling to the transport system and for the release of the potassium ions to the cytoplasm. This chain is Potassium-transporting ATPase ATP-binding subunit, found in Caldanaerobacter subterraneus subsp. tengcongensis (strain DSM 15242 / JCM 11007 / NBRC 100824 / MB4) (Thermoanaerobacter tengcongensis).